Here is a 267-residue protein sequence, read N- to C-terminus: 4-hydroxy-tetrahydrodipicolinate reductase (267 aa).

8 to 13 (GANGRM) provides a ligand contact to NAD(+). An NADP(+)-binding site is contributed by arginine 35. NAD(+) contacts are provided by residues 98–100 (GTT) and 122–125 (AANY). Catalysis depends on histidine 155, which acts as the Proton donor/acceptor. Histidine 156 contributes to the (S)-2,3,4,5-tetrahydrodipicolinate binding site. Lysine 159 functions as the Proton donor in the catalytic mechanism. 165-166 (GT) contributes to the (S)-2,3,4,5-tetrahydrodipicolinate binding site.

Belongs to the DapB family.

It localises to the cytoplasm. It catalyses the reaction (S)-2,3,4,5-tetrahydrodipicolinate + NAD(+) + H2O = (2S,4S)-4-hydroxy-2,3,4,5-tetrahydrodipicolinate + NADH + H(+). It carries out the reaction (S)-2,3,4,5-tetrahydrodipicolinate + NADP(+) + H2O = (2S,4S)-4-hydroxy-2,3,4,5-tetrahydrodipicolinate + NADPH + H(+). It functions in the pathway amino-acid biosynthesis; L-lysine biosynthesis via DAP pathway; (S)-tetrahydrodipicolinate from L-aspartate: step 4/4. Catalyzes the conversion of 4-hydroxy-tetrahydrodipicolinate (HTPA) to tetrahydrodipicolinate. The sequence is that of 4-hydroxy-tetrahydrodipicolinate reductase from Pseudoalteromonas atlantica (strain T6c / ATCC BAA-1087).